A 385-amino-acid polypeptide reads, in one-letter code: UPF0764 protein C16orf89 homolog (385 aa).

The N-terminal stretch at 1–20 is a signal peptide; that stretch reads MARLGLLLLLLLALPPHFSS. The tract at residues 344–385 is disordered; it reads AHPEYYPNHGDPYSSSQSPASNYQDGAAGPDVQRTGRPLSVS. The span at 356–367 shows a compositional bias: polar residues; the sequence is YSSSQSPASNYQ.

This sequence belongs to the UPF0764 family. In terms of assembly, homodimer. Glycosylated. In terms of tissue distribution, predominantly expressed in thyroid tissue.

Its subcellular location is the secreted. This is UPF0764 protein C16orf89 homolog from Mus musculus (Mouse).